The sequence spans 1402 residues: Defective in tip formation protein A (1402 aa).

Disordered regions lie at residues 1 to 20 (MKDI…PPQI), 37 to 94 (NVTT…PQIV), 109 to 133 (NTPS…DNDI), and 210 to 292 (KQSS…RRLK). 2 consecutive repeat copies span residues 12 to 18 (TTTVAPP) and 40 to 46 (TTTVQPP). Residues 12–92 (TTTVAPPQIN…TTTTTVQPPQ (81 aa)) are 4 X 7 AA repeat of T-T-T-[IV]-[AQ]-P-P. Residues 38–47 (VTTTTVQPPQ) show a composition bias toward low complexity. Positions 48–58 (IVSPPSPPSPP) are enriched in pro residues. Low complexity predominate over residues 59–94 (QTTTIAPPTILPTTKTTTTTTTTTTTTTTVQPPQIV). Repeat copies occupy residues 60–66 (TTTIAPP) and 86–92 (TTVQPPQ). The segment covering 210–234 (KQSSQSQLQQQLSSQSLQQIQQKSK) has biased composition (low complexity). Pro residues predominate over residues 235 to 253 (QPPPQQQQQQQPPPPPIPL). The span at 254–279 (LPQIHQQLKPKQQQEQQQQQEQQQQQ) shows a compositional bias: low complexity. A coiled-coil region spans residues 350 to 383 (QRIKSFIENHKKKKQKYREYQSEKNQQQKSNSKK). 2 disordered regions span residues 429-453 (DQQQ…SPMT) and 712-745 (NNNN…NLSN). Low complexity predominate over residues 430–453 (QQQQQQQQQQSTMTTTSSSSSPMT).

It is found in the cell surface. Required for correct organization of the actin cytoskeleton and cytokinesis. Also required for apical sorting of prestalk cells, a prerequisite for formation of the tip at the mound stage and subsequent formation of the fruiting body. May be required for cell adhesion. In Dictyostelium discoideum (Social amoeba), this protein is Defective in tip formation protein A (dtfA).